Here is an 895-residue protein sequence, read N- to C-terminus: Protein translocase subunit SecA (895 aa).

ATP contacts are provided by residues glutamine 87, 105–109 (GEGKT), and aspartate 512. Residues 833 to 852 (TQEEVEQAERQRQEMAKRET) are compositionally biased toward basic and acidic residues. The interval 833-895 (TQEEVEQAER…KHCHGSKAKY (63 aa)) is disordered. Residues cysteine 877, cysteine 879, cysteine 888, and histidine 889 each coordinate Zn(2+). The segment covering 883–895 (KKYKHCHGSKAKY) has biased composition (basic residues).

Belongs to the SecA family. Monomer and homodimer. Part of the essential Sec protein translocation apparatus which comprises SecA, SecYEG and auxiliary proteins SecDF-YajC and YidC. Zn(2+) serves as cofactor.

Its subcellular location is the cell inner membrane. It localises to the cytoplasm. It catalyses the reaction ATP + H2O + cellular proteinSide 1 = ADP + phosphate + cellular proteinSide 2.. In terms of biological role, part of the Sec protein translocase complex. Interacts with the SecYEG preprotein conducting channel. Has a central role in coupling the hydrolysis of ATP to the transfer of proteins into and across the cell membrane, serving both as a receptor for the preprotein-SecB complex and as an ATP-driven molecular motor driving the stepwise translocation of polypeptide chains across the membrane. This is Protein translocase subunit SecA from Pasteurella multocida (strain Pm70).